The chain runs to 231 residues: Aquaporin Z (231 aa).

2 consecutive transmembrane segments (helical) span residues 11 to 31 (FLGTLWLVLGGCGSAVLAAAF) and 36 to 56 (IGLLGVSLAFGLTVLTMAFAI). The short motif at 65-67 (NPA) is the NPA 1 element. The next 3 helical transmembrane spans lie at 84–104 (LPYIIAQVAGGIAGAGVLYLI), 132–152 (MISVMICEIVMTLFFLLVILG), and 161–181 (GFAPIAIGLCLTLIHLISIPI). The NPA 2 signature appears at 187–189 (NPA). Residues 203–223 (VSQLWLFWAAPIIGAILAGVI) traverse the membrane as a helical segment.

This sequence belongs to the MIP/aquaporin (TC 1.A.8) family. As to quaternary structure, homotetramer.

It is found in the cell inner membrane. The enzyme catalyses H2O(in) = H2O(out). In terms of biological role, channel that permits osmotically driven movement of water in both directions. It is involved in the osmoregulation and in the maintenance of cell turgor during volume expansion in rapidly growing cells. It mediates rapid entry or exit of water in response to abrupt changes in osmolarity. This Shewanella oneidensis (strain ATCC 700550 / JCM 31522 / CIP 106686 / LMG 19005 / NCIMB 14063 / MR-1) protein is Aquaporin Z.